We begin with the raw amino-acid sequence, 319 residues long: ATP-dependent 6-phosphofructokinase (319 aa).

Position 11 (Gly11) interacts with ATP. Residue 21–25 (RAVVR) participates in ADP binding. Residues 72–73 (RY) and 102–105 (GDGS) contribute to the ATP site. Asp103 contributes to the Mg(2+) binding site. Residue 125–127 (TID) participates in substrate binding. Asp127 (proton acceptor) is an active-site residue. An ADP-binding site is contributed by Arg154. Residues Arg162 and 169–171 (MGR) each bind substrate. ADP contacts are provided by residues 185 to 187 (GAE), Arg211, and 213 to 215 (KKH). Substrate is bound by residues Glu222, Arg243, and 249–252 (HVQR).

Belongs to the phosphofructokinase type A (PFKA) family. ATP-dependent PFK group I subfamily. Prokaryotic clade 'B1' sub-subfamily. As to quaternary structure, homotetramer. The cofactor is Mg(2+).

The protein localises to the cytoplasm. The enzyme catalyses beta-D-fructose 6-phosphate + ATP = beta-D-fructose 1,6-bisphosphate + ADP + H(+). Its pathway is carbohydrate degradation; glycolysis; D-glyceraldehyde 3-phosphate and glycerone phosphate from D-glucose: step 3/4. With respect to regulation, allosterically activated by ADP and other diphosphonucleosides, and allosterically inhibited by phosphoenolpyruvate. Functionally, catalyzes the phosphorylation of D-fructose 6-phosphate to fructose 1,6-bisphosphate by ATP, the first committing step of glycolysis. In Listeria innocua serovar 6a (strain ATCC BAA-680 / CLIP 11262), this protein is ATP-dependent 6-phosphofructokinase.